The primary structure comprises 134 residues: ATP synthase epsilon chain, chloroplastic (134 aa).

This sequence belongs to the ATPase epsilon chain family. In terms of assembly, F-type ATPases have 2 components, CF(1) - the catalytic core - and CF(0) - the membrane proton channel. CF(1) has five subunits: alpha(3), beta(3), gamma(1), delta(1), epsilon(1). CF(0) has three main subunits: a, b and c.

Its subcellular location is the plastid. The protein localises to the chloroplast thylakoid membrane. Functionally, produces ATP from ADP in the presence of a proton gradient across the membrane. This is ATP synthase epsilon chain, chloroplastic from Amborella trichopoda.